The sequence spans 660 residues: Arginine--tRNA ligase, cytoplasmic (660 aa).

At M1 the chain carries N-acetylmethionine. A could be involved in the assembly of the multisynthetase complex region spans residues 1–72; that stretch reads MDGLVAQCSA…QAERKRPTKN (72 aa). L-arginine is bound by residues 200-202, H211, Y384, D388, and Q412; that span reads SPN. The 'HIGH' region motif lies at 201–212; sequence PNIAKEMHVGHL. The interval 529 to 543 is interaction with tRNA; it reads NTAAYLLYAFTRIRS.

The protein belongs to the class-I aminoacyl-tRNA synthetase family. Interacts (via N-terminus) with AIMP1 (via N-terminus); this stimulates its catalytic activity. Interacts (via N-terminus) with LARS2 (via C-terminus). Monomer. Part of a multisubunit complex that groups tRNA ligases for Arg (RARS1), Asp (DARS1), Gln (QARS1), Ile (IARS1), Leu (LARS1), Lys (KARS1), Met (MARS1) the bifunctional ligase for Glu and Pro (EPRS1) and the auxiliary subunits AIMP1/p43, AIMP2/p38 and EEF1E1/p18. Interacts with QARS1. Part of a complex composed of RARS1, QARS1 and AIMP1. As to expression, detected in dorsal root ganglion.

It localises to the cytoplasm. The protein resides in the cytosol. The catalysed reaction is tRNA(Arg) + L-arginine + ATP = L-arginyl-tRNA(Arg) + AMP + diphosphate. Functionally, forms part of a macromolecular complex that catalyzes the attachment of specific amino acids to cognate tRNAs during protein synthesis. Modulates the secretion of AIMP1 and may be involved in generation of the inflammatory cytokine EMAP2 from AIMP1. The polypeptide is Arginine--tRNA ligase, cytoplasmic (Rars1) (Rattus norvegicus (Rat)).